Here is a 473-residue protein sequence, read N- to C-terminus: Ribulose bisphosphate carboxylase large chain (473 aa).

A propeptide spanning residues Met-1–Ser-2 is cleaved from the precursor. Asn-123 and Thr-173 together coordinate substrate. The active-site Proton acceptor is the Lys-175. Residue Lys-177 coordinates substrate. Residues Lys-201, Asp-203, and Glu-204 each coordinate Mg(2+). Lys-201 is subject to N6-carboxylysine. Ser-208 bears the Phosphoserine mark. Residue His-294 is the Proton acceptor of the active site. Substrate is bound by residues Arg-295 and His-327. Thr-330 carries the phosphothreonine modification. Residue Ser-379 coordinates substrate.

It belongs to the RuBisCO large chain family. Type I subfamily. As to quaternary structure, heterohexadecamer of 8 large chains and 8 small chains; disulfide-linked. The disulfide link is formed within the large subunit homodimers. Mg(2+) serves as cofactor. In terms of processing, the disulfide bond which can form in the large chain dimeric partners within the hexadecamer appears to be associated with oxidative stress and protein turnover.

It is found in the plastid. The protein resides in the chloroplast. It carries out the reaction 2 (2R)-3-phosphoglycerate + 2 H(+) = D-ribulose 1,5-bisphosphate + CO2 + H2O. The enzyme catalyses D-ribulose 1,5-bisphosphate + O2 = 2-phosphoglycolate + (2R)-3-phosphoglycerate + 2 H(+). Its function is as follows. RuBisCO catalyzes two reactions: the carboxylation of D-ribulose 1,5-bisphosphate, the primary event in carbon dioxide fixation, as well as the oxidative fragmentation of the pentose substrate in the photorespiration process. Both reactions occur simultaneously and in competition at the same active site. The polypeptide is Ribulose bisphosphate carboxylase large chain (Sinapis alba (White mustard)).